A 189-amino-acid polypeptide reads, in one-letter code: GMP synthase [glutamine-hydrolyzing] subunit A (189 aa).

The Glutamine amidotransferase type-1 domain maps to 1–189; it reads MIVILNNGGQ…CKVCGFKFNE (189 aa). The Nucleophile role is filled by Cys-76. Active-site residues include His-163 and Glu-165.

Heterodimer composed of a glutamine amidotransferase subunit (A) and a GMP-binding subunit (B).

The catalysed reaction is XMP + L-glutamine + ATP + H2O = GMP + L-glutamate + AMP + diphosphate + 2 H(+). The protein operates within purine metabolism; GMP biosynthesis; GMP from XMP (L-Gln route): step 1/1. Catalyzes the synthesis of GMP from XMP. The polypeptide is GMP synthase [glutamine-hydrolyzing] subunit A (Methanococcus vannielii (strain ATCC 35089 / DSM 1224 / JCM 13029 / OCM 148 / SB)).